The following is a 326-amino-acid chain: Isopenicillin N synthase (326 aa).

The isopenicillin N site is built by Arg-84, Tyr-88, and Tyr-186. N-[(5S)-5-amino-5-carboxypentanoyl]-L-cysteinyl-D-valine is bound by residues Arg-84, Tyr-88, Tyr-186, His-209, and Asp-211. Residues 183–283 (LIRYPFLENY…RLSIPFFANL (101 aa)) form the Fe2OG dioxygenase domain. Positions 209, 211, and 265 each coordinate Fe(2+). Residue Arg-274 participates in 2-oxoglutarate binding. Position 276 (Ser-276) interacts with isopenicillin N. Ser-276 contacts N-[(5S)-5-amino-5-carboxypentanoyl]-L-cysteinyl-D-valine.

This sequence belongs to the iron/ascorbate-dependent oxidoreductase family. The cofactor is Fe cation. L-ascorbate is required as a cofactor.

The enzyme catalyses N-[(5S)-5-amino-5-carboxypentanoyl]-L-cysteinyl-D-valine + O2 = isopenicillin N + 2 H2O. It participates in antibiotic biosynthesis; penicillin G biosynthesis; penicillin G from L-alpha-aminoadipate and L-cysteine and L-valine: step 2/3. In terms of biological role, removes, in the presence of oxygen, 4 hydrogen atoms from delta-L-(alpha-aminoadipyl)-L-cysteinyl-D-valine (ACV) to form the azetidinone and thiazolidine rings of isopenicillin. The chain is Isopenicillin N synthase (pcbC) from Lysobacter lactamgenus.